The sequence spans 390 residues: tRNA-specific 2-thiouridylase MnmA (390 aa).

ATP contacts are provided by residues 33–40 (AMSGGVDS) and Met59. Catalysis depends on Cys131, which acts as the Nucleophile. Cys131 and Cys230 are disulfide-bonded. Gly155 is a binding site for ATP. The segment at 180–182 (KDQ) is interaction with tRNA. The active-site Cysteine persulfide intermediate is Cys230.

Belongs to the MnmA/TRMU family.

Its subcellular location is the cytoplasm. The enzyme catalyses S-sulfanyl-L-cysteinyl-[protein] + uridine(34) in tRNA + AH2 + ATP = 2-thiouridine(34) in tRNA + L-cysteinyl-[protein] + A + AMP + diphosphate + H(+). Catalyzes the 2-thiolation of uridine at the wobble position (U34) of tRNA, leading to the formation of s(2)U34. This Symbiobacterium thermophilum (strain DSM 24528 / JCM 14929 / IAM 14863 / T) protein is tRNA-specific 2-thiouridylase MnmA.